The primary structure comprises 254 residues: Ribonuclease HII (254 aa).

An RNase H type-2 domain is found at 70-254; the sequence is RYICGIDEVG…ASFIKNLTSC (185 aa). D76, E77, and D168 together coordinate a divalent metal cation.

It belongs to the RNase HII family. Mn(2+) serves as cofactor. Requires Mg(2+) as cofactor.

Its subcellular location is the cytoplasm. The catalysed reaction is Endonucleolytic cleavage to 5'-phosphomonoester.. In terms of biological role, endonuclease that specifically degrades the RNA of RNA-DNA hybrids. The protein is Ribonuclease HII of Lachnoclostridium phytofermentans (strain ATCC 700394 / DSM 18823 / ISDg) (Clostridium phytofermentans).